Here is a 146-residue protein sequence, read N- to C-terminus: Hemoglobin subunit beta (146 aa).

The Globin domain occupies 2-146 (HWTAEEKSAI…VAHALAHQYH (145 aa)). Residues His-63 and His-92 each contribute to the heme b site.

Belongs to the globin family. In terms of assembly, heterotetramer of two alpha chains and two beta chains. Oxygenation results in dissociation to dimers. Red blood cells.

Its function is as follows. Involved in oxygen transport from the lung to the various peripheral tissues. In Erythrolamprus miliaris (South American water snake), this protein is Hemoglobin subunit beta (HBB).